The primary structure comprises 400 residues: N(alpha)-acyl-glutamine aminoacylase (400 aa).

It belongs to the peptidase M20 family. Zn(2+) serves as cofactor.

It carries out the reaction an N(2)-acyl-L-glutamine + H2O = a carboxylate + L-glutamine. The enzyme catalyses N(2)-[(2E)-3-methylhex-2-enoyl]-L-glutaminate + H2O = (2E)-3-methylhex-2-enoate + L-glutamine. The catalysed reaction is N(2)-(3-hydroxy-3-methylhexanoyl)-L-glutaminate + H2O = 3-hydroxy-3-methylhexanoate + L-glutamine. Its activity is regulated as follows. Partial loss of activity with the combination Mn(2+) and chelating agents. Activity is lost in presence of 0.5 mM dithiothreitol. Its function is as follows. Hydrolyzes odorless N-alpha-acyl-L-glutamine conjugates of short- and medium-chain fatty acids, releasing human axillary malodor compounds. The enzyme is highly specific for the glutamine residue but has a low specificity for the acyl part of the substrate. The two most common products are 3-methyl-2-hexenoic acid (3M2H) and 3-hydroxy-3-methyl-hexanoic acid (HMHA), which are produced from the odorless precursors N-alpha-3-methyl-2-hexenoyl-L-glutamine (3M2H-Gln) and N-alpha-3-hydroxy-3-methylhexanoyl-L-glutamine (HMHA-Gln). In addition, over 28 different carboxylic acids contributing to human body odor are released by this enzyme from odorless axilla secretions, including several aliphatic 3-hydroxy acids with 4-Me branches, 3,4-unsaturated, 4-Et-branched aliphatic acids, and a variety of degradation products of amino acids. This Corynebacterium striatum protein is N(alpha)-acyl-glutamine aminoacylase.